Consider the following 263-residue polypeptide: Small ribosomal subunit protein eS4, Y isoform 1 (263 aa).

The 63-residue stretch at 42 to 104 folds into the S4 RNA-binding domain; it reads LPLIIFLRNR…TGEHFRLVYD (63 aa).

Belongs to the eukaryotic ribosomal protein eS4 family.

This Monodelphis domestica (Gray short-tailed opossum) protein is Small ribosomal subunit protein eS4, Y isoform 1 (RPS4Y1).